The sequence spans 521 residues: Bifunctional purine biosynthesis protein PurH (521 aa).

One can recognise an MGS-like domain in the interval 1–145; sequence MIKQALISVS…KNHRDVTVVV (145 aa).

The protein belongs to the PurH family.

It carries out the reaction (6R)-10-formyltetrahydrofolate + 5-amino-1-(5-phospho-beta-D-ribosyl)imidazole-4-carboxamide = 5-formamido-1-(5-phospho-D-ribosyl)imidazole-4-carboxamide + (6S)-5,6,7,8-tetrahydrofolate. The catalysed reaction is IMP + H2O = 5-formamido-1-(5-phospho-D-ribosyl)imidazole-4-carboxamide. It functions in the pathway purine metabolism; IMP biosynthesis via de novo pathway; 5-formamido-1-(5-phospho-D-ribosyl)imidazole-4-carboxamide from 5-amino-1-(5-phospho-D-ribosyl)imidazole-4-carboxamide (10-formyl THF route): step 1/1. The protein operates within purine metabolism; IMP biosynthesis via de novo pathway; IMP from 5-formamido-1-(5-phospho-D-ribosyl)imidazole-4-carboxamide: step 1/1. The chain is Bifunctional purine biosynthesis protein PurH from Burkholderia orbicola (strain AU 1054).